The primary structure comprises 195 residues: Apoptosis-associated speck-like protein containing a CARD (195 aa).

A Pyrin domain is found at 1–91 (MGRARDAILD…AGQLQAATHQ (91 aa)). Glycyl lysine isopeptide (Lys-Gly) (interchain with G-Cter in ubiquitin) cross-links involve residues Lys-55 and Lys-174. Positions 107–195 (AAKPGLHFID…SYLVEDLERS (89 aa)) constitute a CARD domain. Ser-195 carries the post-translational modification Phosphoserine.

In terms of assembly, self-associates; enforced oligomerization induces apoptosis, NF-kappa-B regulation and interleukin-1 beta secretion. Homooligomers can form disk-like particles of approximately 12 nm diameter and approximately 1 nm height. Next to isoform 1, also isoform 2 and isoform 3 may be involved in oligomerization leading to functional regulation. Component of several inflammasomes containing one pattern recognition receptor/sensor, such as NLRP1, NLRP2, NLRP3, NLRP6, NLRC4, AIM2, MEFV or NOD2, and probably NLRC4, NLRP12 or IFI16. Major component of the ASC pyroptosome, a 1-2 um supramolecular assembly (one per macrophage cell) which consists of oligomerized PYCARD dimers and CASP1. Interacts with CASP1 (precursor form); the interaction induces activation of CASP1 leading to the processing of interleukin-1 beta; PYCARD competes with RIPK2 for binding to CASP1. Interacts with NLRP3; the interaction requires the homooligomerization of NLRP3. Interacts with NLRP2, NLRC4, MEFV, CARD16, AIM2, IFI16, NOD2, RIGI, RIPK2, PYDC1, PYDC2, NLRP10, CASP8, CHUK, IKBKB and BAX. Component of the AIM2 PANoptosome complex, a multiprotein complex that drives inflammatory cell death (PANoptosis). Post-translationally, phosphorylated. In terms of processing, 'Lys-63'-linked polyubiquitination by TRAF3 is critical for speck formation and inflammasome activation. 'Lys-63'-linked deubiquitinated by USP50; a crucial step for NLRP3-mediated inflammasome activation. 'Lys-63'-linked polyubiquitination by PELI1 is also critical for speck formation and inflammasome activation. Deubiquitinated by USP3 that cleaves 'Lys-48'-linked ubiquitin chains and strengthens its stability by blocking proteasomal degradation. As to expression, widely expressed at low levels. Detected in peripheral blood leukocytes, lung, small intestine, spleen, thymus, colon and at lower levels in placenta, liver and kidney. Very low expression in skeletal muscle, heart and brain. Expressed in lung epithelial cells (at protein level). Detected in the leukemia cell lines HL-60 and U-937, but not in Jurkat T-cell lymphoma and Daudi Burkitt's lymphoma. Detected in the melanoma cell line WM35, but not in WM793. Not detected in HeLa cervical carcinoma cells and MOLT-4 lymphocytic leukemia cells.

The protein localises to the cytoplasm. The protein resides in the inflammasome. It is found in the endoplasmic reticulum. It localises to the mitochondrion. Its subcellular location is the nucleus. The protein localises to the golgi apparatus membrane. Functionally, functions as a key mediator in apoptosis and inflammation. Promotes caspase-mediated apoptosis involving predominantly caspase-8 and also caspase-9 in a probable cell type-specific manner. Involved in activation of the mitochondrial apoptotic pathway, promotes caspase-8-dependent proteolytic maturation of BID independently of FADD in certain cell types and also mediates mitochondrial translocation of BAX and activates BAX-dependent apoptosis coupled to activation of caspase-9, -2 and -3. Involved in innate immune response by acting as an integral adapter in the assembly of various inflammasomes (NLRP1, NLRP2, NLRP3, NLRP6, AIM2 and probably IFI16) which recruit and activate caspase-1 leading to processing and secretion of pro-inflammatory cytokines. Caspase-1-dependent inflammation leads to macrophage pyroptosis, a form of cell death. The function as activating adapter in different types of inflammasomes is mediated by the pyrin and CARD domains and their homotypic interactions. Clustered PYCARD nucleates the formation of caspase-1 filaments through the interaction of their respective CARD domains, acting as a platform for of caspase-1 polymerization. In the NLRP1 and NLRC4 inflammasomes seems not be required but facilitates the processing of procaspase-1. In cooperation with NOD2 involved in an inflammasome activated by bacterial muramyl dipeptide leading to caspase-1 activation. May be involved in RIGI-triggered pro-inflammatory responses and inflammasome activation. In collaboration with AIM2 which detects cytosolic double-stranded DNA may also be involved in a caspase-1-independent cell death that involves caspase-8. In adaptive immunity may be involved in maturation of dendritic cells to stimulate T-cell immunity and in cytoskeletal rearrangements coupled to chemotaxis and antigen uptake may be involved in post-transcriptional regulation of the guanine nucleotide exchange factor DOCK2; the latter function is proposed to involve the nuclear form. Also involved in transcriptional activation of cytokines and chemokines independent of the inflammasome; this function may involve AP-1, NF-kappa-B, MAPK and caspase-8 signaling pathways. For regulation of NF-kappa-B activating and inhibiting functions have been reported. Modulates NF-kappa-B induction at the level of the IKK complex by inhibiting kinase activity of CHUK and IKBK. Proposed to compete with RIPK2 for association with CASP1 thereby down-regulating CASP1-mediated RIPK2-dependent NF-kappa-B activation and activating interleukin-1 beta processing. Modulates host resistance to DNA virus infection, probably by inducing the cleavage of and inactivating CGAS in presence of cytoplasmic double-stranded DNA. May have a regulating effect on the function as inflammasome adapter. In terms of biological role, seems to inhibit inflammasome-mediated maturation of interleukin-1 beta. In Homo sapiens (Human), this protein is Apoptosis-associated speck-like protein containing a CARD.